A 75-amino-acid chain; its full sequence is Putative membrane protein insertion efficiency factor (75 aa).

The protein belongs to the UPF0161 family.

Its subcellular location is the cell membrane. Functionally, could be involved in insertion of integral membrane proteins into the membrane. This is Putative membrane protein insertion efficiency factor (ytjA) from Bacillus subtilis (strain 168).